The chain runs to 1025 residues: Probable beta-galactosidase B (1025 aa).

Positions 1–21 (MATAFWLLLFLLGSLHVLTAA) are cleaved as a signal peptide. Asparagine 23 is a glycosylation site (N-linked (GlcNAc...) asparagine). Tyrosine 90 contributes to the substrate binding site. The N-linked (GlcNAc...) asparagine glycan is linked to asparagine 100. 4 residues coordinate substrate: asparagine 135, alanine 136, glutamate 137, and asparagine 195. Glutamate 196 acts as the Proton donor in catalysis. Asparagine 211 carries an N-linked (GlcNAc...) asparagine glycan. Tyrosine 265 lines the substrate pocket. A disulfide bridge links cysteine 271 with cysteine 324. Glutamate 308 acts as the Nucleophile in catalysis. A substrate-binding site is contributed by tyrosine 373. Asparagine 411, asparagine 456, asparagine 736, asparagine 776, asparagine 884, asparagine 925, and asparagine 926 each carry an N-linked (GlcNAc...) asparagine glycan.

Belongs to the glycosyl hydrolase 35 family.

Its subcellular location is the secreted. The enzyme catalyses Hydrolysis of terminal non-reducing beta-D-galactose residues in beta-D-galactosides.. Its function is as follows. Cleaves beta-linked terminal galactosyl residues from gangliosides, glycoproteins, and glycosaminoglycans. The polypeptide is Probable beta-galactosidase B (lacB) (Emericella nidulans (strain FGSC A4 / ATCC 38163 / CBS 112.46 / NRRL 194 / M139) (Aspergillus nidulans)).